The primary structure comprises 524 residues: Solute carrier family 40 member 1 (524 aa).

Over residues 1–18 (MENETELRVVHQEEQQRE) the composition is skewed to basic and acidic residues. The segment at 1 to 30 (MENETELRVVHQEEQQREEGEDESQPQNPP) is disordered. Transmembrane regions (helical) follow at residues 70–92 (SLLLAAIYGAIESGSTAIFGPIV), 109–129 (LLFQNLSYTIAGGAVIKLLLV), 137–157 (LPVFAILIVLTNLAGAIGVLS), 191–211 (GIDLSSKLLSPVITGLIISFV), 218–238 (ITFAAWATITAWVEYWLFISV), 314–334 (VVLPGVSLALLFFTVLSFGTL), 347–367 (YIIGIGRGISATVGLAATLVY), 380–400 (GLWSFWSQWSCLLVCVGSIWV), 409–429 (MLMAGVAASRLGLWMFDLAVI), 446–466 (GVQNSLQSALDLMAYLLGIIV), and 472–492 (FWILTLISFSTVSLAGMLYTI).

The protein belongs to the ferroportin (FP) (TC 2.A.100) family. SLC40A subfamily.

It is found in the membrane. Its function is as follows. May be involved in iron transport and iron homeostasis. In Arabidopsis thaliana (Mouse-ear cress), this protein is Solute carrier family 40 member 1 (IREG1).